Reading from the N-terminus, the 428-residue chain is Glutamate-1-semialdehyde 2,1-aminomutase (428 aa).

At lysine 265 the chain carries N6-(pyridoxal phosphate)lysine.

This sequence belongs to the class-III pyridoxal-phosphate-dependent aminotransferase family. HemL subfamily. Homodimer. The cofactor is pyridoxal 5'-phosphate.

The protein localises to the cytoplasm. The catalysed reaction is (S)-4-amino-5-oxopentanoate = 5-aminolevulinate. It participates in porphyrin-containing compound metabolism; protoporphyrin-IX biosynthesis; 5-aminolevulinate from L-glutamyl-tRNA(Glu): step 2/2. The sequence is that of Glutamate-1-semialdehyde 2,1-aminomutase from Shewanella frigidimarina (strain NCIMB 400).